Reading from the N-terminus, the 425-residue chain is Zinc finger protein 789 (425 aa).

A KRAB domain is found at 11–82 (LSFEDVAMYF…DLPRTGNRKA (72 aa)). 8 consecutive C2H2-type zinc fingers follow at residues 201–223 (YECS…QRIH), 229–251 (FECK…KQCH), 257–279 (YRCH…KRIH), 285–307 (YKCS…QVIH), 313–335 (HKCL…QQIH), 341–363 (HKCS…QRIH), 369–391 (FQCG…QVIH), and 397–419 (YQCV…QGTH).

It belongs to the krueppel C2H2-type zinc-finger protein family.

It is found in the nucleus. Functionally, may be involved in transcriptional regulation. This chain is Zinc finger protein 789 (ZNF789), found in Homo sapiens (Human).